The sequence spans 156 residues: Small ribosomal subunit protein uS7 (156 aa).

This sequence belongs to the universal ribosomal protein uS7 family. As to quaternary structure, part of the 30S ribosomal subunit. Contacts proteins S9 and S11.

One of the primary rRNA binding proteins, it binds directly to 16S rRNA where it nucleates assembly of the head domain of the 30S subunit. Is located at the subunit interface close to the decoding center, probably blocks exit of the E-site tRNA. The sequence is that of Small ribosomal subunit protein uS7 from Paramagnetospirillum magneticum (strain ATCC 700264 / AMB-1) (Magnetospirillum magneticum).